The primary structure comprises 123 residues: Angiogenin-2 (123 aa).

Gln1 is subject to Pyrrolidone carboxylic acid. His12 serves as the catalytic Proton acceptor. 3 disulfide bridges follow: Cys25–Cys80, Cys38–Cys91, and Cys56–Cys106. The Nucleolar localization signal signature appears at 30 to 34; it reads ERRNM. Asn33 is a glycosylation site (N-linked (GlcNAc...) asparagine). Zn(2+) contacts are provided by Asp40, His82, and His113. His113 serves as the catalytic Proton donor.

Belongs to the pancreatic ribonuclease family. In terms of tissue distribution, serum and milk.

It is found in the cytoplasmic vesicle. The protein resides in the secretory vesicle lumen. It localises to the secreted. Its subcellular location is the nucleus. The protein localises to the nucleolus. Divalent metal ions, such as Cu2+ and Zn2+, may inhibit the ribonucleolytic activity. In terms of biological role, binds tightly to placental ribonuclease inhibitor and has very low ribonuclease activity. Has potent angiogenic activity. Angiogenin induces vascularization of normal and malignant tissues. Abolishes protein synthesis by specifically hydrolyzing cellular tRNAs. In Bos taurus (Bovine), this protein is Angiogenin-2.